A 130-amino-acid chain; its full sequence is Small ribosomal subunit protein uS8 (130 aa).

Belongs to the universal ribosomal protein uS8 family. As to quaternary structure, part of the 30S ribosomal subunit. Contacts proteins S5 and S12.

In terms of biological role, one of the primary rRNA binding proteins, it binds directly to 16S rRNA central domain where it helps coordinate assembly of the platform of the 30S subunit. The sequence is that of Small ribosomal subunit protein uS8 from Aliivibrio fischeri (strain ATCC 700601 / ES114) (Vibrio fischeri).